Reading from the N-terminus, the 470-residue chain is Probable citrate synthase, mitochondrial (470 aa).

Residues His297, His351, and Asp406 contribute to the active site.

Belongs to the citrate synthase family. In terms of assembly, homodimer.

The protein localises to the mitochondrion matrix. It catalyses the reaction oxaloacetate + acetyl-CoA + H2O = citrate + CoA + H(+). The protein operates within carbohydrate metabolism; tricarboxylic acid cycle; isocitrate from oxaloacetate: step 1/2. This Leishmania braziliensis protein is Probable citrate synthase, mitochondrial.